We begin with the raw amino-acid sequence, 303 residues long: Coenzyme PQQ synthesis protein B (303 aa).

It belongs to the PqqB family.

The protein operates within cofactor biosynthesis; pyrroloquinoline quinone biosynthesis. In terms of biological role, may be involved in the transport of PQQ or its precursor to the periplasm. The protein is Coenzyme PQQ synthesis protein B of Acinetobacter baumannii (strain AYE).